The chain runs to 1401 residues: DNA-directed RNA polymerase subunit beta (1401 aa).

It belongs to the RNA polymerase beta chain family. As to quaternary structure, the RNAP catalytic core consists of 2 alpha, 1 beta, 1 beta' and 1 omega subunit. When a sigma factor is associated with the core the holoenzyme is formed, which can initiate transcription.

The enzyme catalyses RNA(n) + a ribonucleoside 5'-triphosphate = RNA(n+1) + diphosphate. Functionally, DNA-dependent RNA polymerase catalyzes the transcription of DNA into RNA using the four ribonucleoside triphosphates as substrates. The polypeptide is DNA-directed RNA polymerase subunit beta (Desulforapulum autotrophicum (strain ATCC 43914 / DSM 3382 / VKM B-1955 / HRM2) (Desulfobacterium autotrophicum)).